A 581-amino-acid chain; its full sequence is AP2-like ethylene-responsive transcription factor AIL6 (581 aa).

Disordered stretches follow at residues 105 to 132 (VRYS…HHNQ) and 205 to 240 (NNTN…TDSE). Low complexity-rich tracts occupy residues 108–122 (SDNS…SLTQ) and 218–232 (RGNN…NNNN). DNA-binding regions (AP2/ERF) lie at residues 268 to 331 (IYRG…TNFP) and 367 to 425 (IYRG…TNFE).

The protein belongs to the AP2/ERF transcription factor family. AP2 subfamily. Expressed in roots, seedlings, hypocotyl, inflorescence, siliques, and pistils. Also detected at low levels in leaves.

It localises to the nucleus. In terms of biological role, probably acts as a transcriptional activator. Binds to the GCC-box pathogenesis-related promoter element. May be involved in the regulation of gene expression by stress factors and by components of stress signal transduction pathways. The sequence is that of AP2-like ethylene-responsive transcription factor AIL6 from Arabidopsis thaliana (Mouse-ear cress).